The sequence spans 1759 residues: Histone-lysine N-methyltransferase ASHH2 (1759 aa).

3 stretches are compositionally biased toward basic and acidic residues: residues 154–165 (QEKEAPQAKEDE), 197–206 (ETTKHIKPDE), and 215–224 (RFDDGGKEGR). Disordered stretches follow at residues 154-181 (QEKE…GIDT), 197-237 (ETTK…GSSD), 437-482 (CEAG…IESI), 515-556 (SNNI…NRNI), and 738-816 (DELR…VGRI). Residues 462–472 (SARHLRKSSRK) are compositionally biased toward basic residues. A compositionally biased stretch (polar residues) spans 530–556 (RSQGNLNNGEHNRSSHNGNVEGSNRNI). Positions 758 to 775 (KKAKHPKSKSNGTKKGKS) are enriched in basic residues. Composition is skewed to basic and acidic residues over residues 776–797 (KFSE…EQRK) and 804–816 (GRDD…VGRI). A CW-type zinc finger spans residues 859 to 912 (YSTESAWVRCDDCFKWRRIPASVVGSIDESSRWICMNNSDKRFADCSKSQEMSN). Positions 868, 871, 893, and 904 each coordinate Zn(2+). In terms of domain architecture, AWS spans 974-1024 (DEIMVCHCKPSPDGRLGCGEECLNRMLNIECLQGTCPAGDLCSNQQFQKRK). An SET domain is found at 1026–1143 (VKFERFQSGK…KGQELTFDYN (118 aa)). Residue Tyr-1142 coordinates S-adenosyl-L-methionine. The 17-residue stretch at 1151–1167 (AAKKCYCGSSHCRGYIG) folds into the Post-SET domain. Disordered regions lie at residues 1225–1253 (GYKD…PPPL), 1271–1345 (AVQQ…PGVN), 1496–1606 (ERSE…FSSP), and 1727–1759 (KQSV…KLNS). Residues 1232-1241 (DNTQTQSSVS) are compositionally biased toward polar residues. Positions 1284–1293 (STSPTSSSLS) are enriched in low complexity. Over residues 1304–1316 (KTTKHGSGEDKKI) the composition is skewed to basic and acidic residues. Basic residues predominate over residues 1317-1326 (LPRPRPRMKT). Residues 1511 to 1521 (ASQEPRYDHQS) show a composition bias toward basic and acidic residues. A compositionally biased stretch (polar residues) spans 1530 to 1556 (SVTSSKAATPETASVSEGYSEPNSGLP). The segment covering 1566–1577 (RWDQPSKTKEQR) has biased composition (basic and acidic residues). Residues 1581–1594 (ILSQQTDETNGNQD) are compositionally biased toward polar residues.

It belongs to the class V-like SAM-binding methyltransferase superfamily. Histone-lysine methyltransferase family. SET2 subfamily. In terms of assembly, interacts with FRI and SUF4, two components of the transcription activator complex FRI-C, and with SWC6, a component of the SWR1 chromatin-remodeling complex. Interacts with BZR2/BES1 and IWS1. As to expression, ubiquitous, with higher levels in young tissues, including shoot and root apex. Expressed in ovules, tapetum layer and microspores.

Its subcellular location is the nucleus. The protein localises to the chromosome. The protein resides in the centromere. It carries out the reaction N(6)-methyl-L-lysyl(36)-[histone H3] + S-adenosyl-L-methionine = N(6),N(6)-dimethyl-L-lysyl(36)-[histone H3] + S-adenosyl-L-homocysteine + H(+). The enzyme catalyses N(6),N(6)-dimethyl-L-lysyl(36)-[histone H3] + S-adenosyl-L-methionine = N(6),N(6),N(6)-trimethyl-L-lysyl(36)-[histone H3] + S-adenosyl-L-homocysteine + H(+). Its function is as follows. Histone methyltransferase involved in di and tri-methylation of 'Lys-36' of histone H3 (H3K36me2 and H3K36me3). Binds to H3 already mono- or di-methylated on 'Lys-4'(H3K4me1 or H3K4me2), but not to H3K4me3. H3K4me and H3K36me represent specific tags for epigenetic transcriptional activation. Positively regulates FLC transcription to prevent early flowering transition. Required for flowering transition in response to vernalization and for the maintenance of FLC expression in late embryos, but dispensable for the initial reactivation in early embryos during reprogramming. Also seems to modulate several traits including floral organ size, root size and dormancy. Promotes apical dominance. Directly involved in the tri-methylation of 'Lys-36' of histone H3 (H3K36me3) at LAZ5 chromatin to maintain a transcriptionally active state of LAZ5, a TIR-NB-LRR protein involved in innate immunity. Required for brassinosteroid (BR)-induced gene expression and histone H3 trimethylation on 'Lys-36' (H3K36me3) in BR-regulated genes. The chain is Histone-lysine N-methyltransferase ASHH2 from Arabidopsis thaliana (Mouse-ear cress).